Consider the following 396-residue polypeptide: Elongation factor Tu (396 aa).

The tr-type G domain occupies 10 to 205; it reads KSHANIGTIG…AVDEYIPTPE (196 aa). Residues 19 to 26 form a G1 region; it reads GHVDHGKT. GTP is bound at residue 19-26; that stretch reads GHVDHGKT. Mg(2+) is bound at residue Thr-26. Residues 61–65 are G2; that stretch reads GITIS. Residues 82–85 form a G3 region; that stretch reads DCPG. Residues 82 to 86 and 137 to 140 each bind GTP; these read DCPGH and NKCD. Positions 137 to 140 are G4; that stretch reads NKCD. Residues 175–177 are G5; it reads SAL.

The protein belongs to the TRAFAC class translation factor GTPase superfamily. Classic translation factor GTPase family. EF-Tu/EF-1A subfamily. Monomer.

It is found in the cytoplasm. It catalyses the reaction GTP + H2O = GDP + phosphate + H(+). In terms of biological role, GTP hydrolase that promotes the GTP-dependent binding of aminoacyl-tRNA to the A-site of ribosomes during protein biosynthesis. The chain is Elongation factor Tu from Bacillus velezensis (strain DSM 23117 / BGSC 10A6 / LMG 26770 / FZB42) (Bacillus amyloliquefaciens subsp. plantarum).